An 823-amino-acid polypeptide reads, in one-letter code: Probable inorganic carbon transporter subunit DabA (823 aa).

Cysteine 361, aspartate 363, histidine 527, and cysteine 542 together coordinate Zn(2+).

Belongs to the inorganic carbon transporter (TC 9.A.2) DabA family. Forms a complex with DabB. The cofactor is Zn(2+).

It is found in the cell inner membrane. With respect to regulation, intracellular DIC accumulation is sensitive to CCCP (carbonyl cyanide-m-chlorophenylhydrazone) and DCCD (N,N-dicyclohexylcarbodiimide) and therefore likely driven by either proton potential, ATP, or both. Part of an energy-coupled inorganic carbon pump. Its function is as follows. Probably involved in transport of dissolved inorganic carbon (DIC) with upstream gene dabB (Tcr_0853); has been suggested to be a proton-DIC symporter. The sequence is that of Probable inorganic carbon transporter subunit DabA from Hydrogenovibrio crunogenus (strain DSM 25203 / XCL-2) (Thiomicrospira crunogena).